The following is a 750-amino-acid chain: Sulfhydryl oxidase 1 (750 aa).

The N-terminal stretch at 1–32 is a signal peptide; the sequence is MRRCGRHSGPPSLLLLLLLLPPLLLSVPGAYA. In terms of domain architecture, Thioredoxin spans 33-159; the sequence is ARLSVLYSSS…RMRLIDALES (127 aa). Active-site nucleophile residues include Cys-73 and Cys-76. Disulfide bonds link Cys-73-Cys-76 and Cys-104-Cys-113. N-linked (GlcNAc...) asparagine glycosylation is found at Asn-133 and Asn-246. A disulfide bridge connects residues Cys-396 and Cys-408. The ERV/ALR sulfhydryl oxidase domain occupies 399 to 506; that stretch reads SEPHFRGFPC…EDPQFPKVQW (108 aa). Residues Arg-404, Trp-411, His-415, Asp-454, His-458, 481–488, Lys-503, and Trp-506 contribute to the FAD site; that span reads WTSHNRVN. The cysteines at positions 452 and 455 are disulfide-linked. A disulfide bridge links Cys-512 with Cys-515. Disordered stretches follow at residues 545-567 and 585-632; these read VRDP…ASPN and EQAA…PEHT. Low complexity predominate over residues 587 to 597; it reads AASAASPGATA. The chain crosses the membrane as a helical span at residues 710-730; it reads FLDISLCVGLYSVSFMGLLAM.

It belongs to the quiescin-sulfhydryl oxidase (QSOX) family. In terms of assembly, monomer. It depends on FAD as a cofactor. Post-translationally, N-glycosylated. O-glycosylated on Thr and Ser residues. As to expression, isoform 3: Detected in seminal vesicle fluid (at protein level). Isoform 1: Detected in brain, hypophysis, heart, testis and the seminal vesicle. Isoform 3: Highly expressed in the seminal vesicles followed by testis, heart, brain, thymus, hypophysis and lung. Also expressed in prostate, kidney, spleen, liver.

Its subcellular location is the golgi apparatus membrane. The protein localises to the secreted. It catalyses the reaction 2 R'C(R)SH + O2 = R'C(R)S-S(R)CR' + H2O2. Functionally, catalyzes the oxidation of sulfhydryl groups in peptide and protein thiols to disulfides with the reduction of oxygen to hydrogen peroxide. Plays a role in disulfide bond formation in a variety of extracellular proteins. In fibroblasts, required for normal incorporation of laminin into the extracellular matrix, and thereby for normal cell-cell adhesion and cell migration. This chain is Sulfhydryl oxidase 1 (Qsox1), found in Rattus norvegicus (Rat).